The following is a 71-amino-acid chain: SRY-related protein LG27 (71 aa).

Positions 1–68 (VKRPMNAFMV…KHMADYPNYK (68 aa)) form a DNA-binding region, HMG box.

It localises to the nucleus. The chain is SRY-related protein LG27 from Eublepharis macularius (Leopard gecko).